A 314-amino-acid polypeptide reads, in one-letter code: Lipoyl synthase (314 aa).

[4Fe-4S] cluster contacts are provided by C40, C45, C51, C67, C71, C74, and S280. One can recognise a Radical SAM core domain in the interval 53–269 (SERKTATFMI…KNIALEKGFS (217 aa)).

This sequence belongs to the radical SAM superfamily. Lipoyl synthase family. It depends on [4Fe-4S] cluster as a cofactor.

It is found in the cytoplasm. The catalysed reaction is [[Fe-S] cluster scaffold protein carrying a second [4Fe-4S](2+) cluster] + N(6)-octanoyl-L-lysyl-[protein] + 2 oxidized [2Fe-2S]-[ferredoxin] + 2 S-adenosyl-L-methionine + 4 H(+) = [[Fe-S] cluster scaffold protein] + N(6)-[(R)-dihydrolipoyl]-L-lysyl-[protein] + 4 Fe(3+) + 2 hydrogen sulfide + 2 5'-deoxyadenosine + 2 L-methionine + 2 reduced [2Fe-2S]-[ferredoxin]. Its pathway is protein modification; protein lipoylation via endogenous pathway; protein N(6)-(lipoyl)lysine from octanoyl-[acyl-carrier-protein]. Catalyzes the radical-mediated insertion of two sulfur atoms into the C-6 and C-8 positions of the octanoyl moiety bound to the lipoyl domains of lipoate-dependent enzymes, thereby converting the octanoylated domains into lipoylated derivatives. The chain is Lipoyl synthase from Oceanobacillus iheyensis (strain DSM 14371 / CIP 107618 / JCM 11309 / KCTC 3954 / HTE831).